The primary structure comprises 258 residues: UPF0246 protein CKO_03380 (258 aa).

Belongs to the UPF0246 family.

This chain is UPF0246 protein CKO_03380, found in Citrobacter koseri (strain ATCC BAA-895 / CDC 4225-83 / SGSC4696).